The chain runs to 301 residues: CRISPR-associated endonuclease Cas1 (301 aa).

Mn(2+) is bound by residues Glu-133, His-200, and Asp-213.

It belongs to the CRISPR-associated endonuclease Cas1 family. As to quaternary structure, homodimer, forms a heterotetramer with a Cas2 homodimer. Mg(2+) serves as cofactor. Mn(2+) is required as a cofactor.

Its function is as follows. CRISPR (clustered regularly interspaced short palindromic repeat), is an adaptive immune system that provides protection against mobile genetic elements (viruses, transposable elements and conjugative plasmids). CRISPR clusters contain spacers, sequences complementary to antecedent mobile elements, and target invading nucleic acids. CRISPR clusters are transcribed and processed into CRISPR RNA (crRNA). Acts as a dsDNA endonuclease. Involved in the integration of spacer DNA into the CRISPR cassette. The chain is CRISPR-associated endonuclease Cas1 from Clostridium sp. (strain SY8519).